Reading from the N-terminus, the 366-residue chain is Aminomethyltransferase (366 aa).

This sequence belongs to the GcvT family. As to quaternary structure, the glycine cleavage system is composed of four proteins: P, T, L and H.

It catalyses the reaction N(6)-[(R)-S(8)-aminomethyldihydrolipoyl]-L-lysyl-[protein] + (6S)-5,6,7,8-tetrahydrofolate = N(6)-[(R)-dihydrolipoyl]-L-lysyl-[protein] + (6R)-5,10-methylene-5,6,7,8-tetrahydrofolate + NH4(+). Functionally, the glycine cleavage system catalyzes the degradation of glycine. The sequence is that of Aminomethyltransferase from Bacillus anthracis (strain A0248).